The sequence spans 222 residues: Small ribosomal subunit protein uS3 (222 aa).

Positions 39-108 (IRKFVKNKLS…NVLINIVEVK (70 aa)) constitute a KH type-2 domain.

Belongs to the universal ribosomal protein uS3 family. Part of the 30S ribosomal subunit. Forms a tight complex with proteins S10 and S14.

Its function is as follows. Binds the lower part of the 30S subunit head. Binds mRNA in the 70S ribosome, positioning it for translation. The sequence is that of Small ribosomal subunit protein uS3 from Clostridium acetobutylicum (strain ATCC 824 / DSM 792 / JCM 1419 / IAM 19013 / LMG 5710 / NBRC 13948 / NRRL B-527 / VKM B-1787 / 2291 / W).